The sequence spans 432 residues: Enolase (432 aa).

Gln-166 serves as a coordination point for (2R)-2-phosphoglycerate. Catalysis depends on Glu-208, which acts as the Proton donor. The Mg(2+) site is built by Asp-245, Glu-291, and Asp-318. Positions 343, 372, 373, and 394 each coordinate (2R)-2-phosphoglycerate. The Proton acceptor role is filled by Lys-343.

It belongs to the enolase family. It depends on Mg(2+) as a cofactor.

It is found in the cytoplasm. The protein resides in the secreted. The protein localises to the cell surface. It catalyses the reaction (2R)-2-phosphoglycerate = phosphoenolpyruvate + H2O. The protein operates within carbohydrate degradation; glycolysis; pyruvate from D-glyceraldehyde 3-phosphate: step 4/5. Catalyzes the reversible conversion of 2-phosphoglycerate (2-PG) into phosphoenolpyruvate (PEP). It is essential for the degradation of carbohydrates via glycolysis. The sequence is that of Enolase from Leptospira interrogans serogroup Icterohaemorrhagiae serovar copenhageni (strain Fiocruz L1-130).